Consider the following 210-residue polypeptide: Pyrrolidone-carboxylate peptidase (210 aa).

Residues glutamate 80, cysteine 143, and histidine 162 contribute to the active site.

This sequence belongs to the peptidase C15 family. In terms of assembly, homotetramer.

Its subcellular location is the cytoplasm. It carries out the reaction Release of an N-terminal pyroglutamyl group from a polypeptide, the second amino acid generally not being Pro.. Functionally, removes 5-oxoproline from various penultimate amino acid residues except L-proline. This is Pyrrolidone-carboxylate peptidase from Chromobacterium violaceum (strain ATCC 12472 / DSM 30191 / JCM 1249 / CCUG 213 / NBRC 12614 / NCIMB 9131 / NCTC 9757 / MK).